The chain runs to 141 residues: Ly6/PLAUR domain-containing protein 1 (141 aa).

The first 20 residues, 1-20 (MWVLGIAATFCGLFLLPGFA), serve as a signal peptide directing secretion. 6 disulfides stabilise this stretch: cysteine 25–cysteine 54, cysteine 28–cysteine 37, cysteine 46–cysteine 71, cysteine 77–cysteine 100, cysteine 88–cysteine 97, and cysteine 101–cysteine 106. Residues 25–107 (CYQCEEFQLN…ISCCNTPLCN (83 aa)) form the UPAR/Ly6 domain. N-linked (GlcNAc...) asparagine glycosylation occurs at asparagine 45. Serine 117 is lipidated: GPI-anchor amidated serine. Residues 118 to 141 (ASALRPGLRTTILFLKLALFSAHC) constitute a propeptide, removed in mature form.

Interacts with CHRNA4 and nAChRs containing alpha-4:beta-2 (CHRNA4:CHRNB2) and alpha-7 (CHRNA7) subunits.

It localises to the cell membrane. Functionally, believed to act as a modulator of nicotinic acetylcholine receptors (nAChRs) activity. In vitro increases receptor desensitization and decreases affinity for ACh of alpha-4:beta-2-containing nAChRs. May play a role in the intracellular trafficking of alpha-4:beta-2 and alpha-7-containing nAChRs and may inhibit their expression at the cell surface. May be involved in the control of anxiety. This is Ly6/PLAUR domain-containing protein 1 (LYPD1) from Homo sapiens (Human).